The primary structure comprises 308 residues: Aspartate carbamoyltransferase catalytic subunit (308 aa).

Carbamoyl phosphate-binding residues include R57 and T58. L-aspartate is bound at residue K86. 3 residues coordinate carbamoyl phosphate: R107, H135, and Q138. Residues R168 and R229 each coordinate L-aspartate. Carbamoyl phosphate is bound by residues L268 and P269.

It belongs to the aspartate/ornithine carbamoyltransferase superfamily. ATCase family. In terms of assembly, heterooligomer of catalytic and regulatory chains.

It carries out the reaction carbamoyl phosphate + L-aspartate = N-carbamoyl-L-aspartate + phosphate + H(+). Its pathway is pyrimidine metabolism; UMP biosynthesis via de novo pathway; (S)-dihydroorotate from bicarbonate: step 2/3. Catalyzes the condensation of carbamoyl phosphate and aspartate to form carbamoyl aspartate and inorganic phosphate, the committed step in the de novo pyrimidine nucleotide biosynthesis pathway. The chain is Aspartate carbamoyltransferase catalytic subunit from Pyrococcus abyssi (strain GE5 / Orsay).